The following is a 204-amino-acid chain: MSDLRITEAFLYMDYLCFRALCCKGPPPARPEYDLVCIGLTGSGKTSLLSKLCSESPDNVVSTTGFSIKAVPFQNAILNVKELGGADNIRKYWSRYYQGSQGVIFVLDSASSEDDLEAARNELHSALQHPQLCTLPFLILANHQDKPAARSVQEIKKYFELEPLARGKRWILQPCSLDDMDALKDSFSQLINLLEEKDHEAVRM.

GTP-binding positions include 39-46 (GLTGSGKT), 82-86 (ELGGA), and 142-145 (NHQD).

Belongs to the small GTPase superfamily. Arf family.

The protein is ADP-ribosylation factor-like protein 15 (ARL15) of Homo sapiens (Human).